The primary structure comprises 869 residues: Protein translocase subunit SecA (869 aa).

ATP-binding positions include glutamine 88, 106–110 (GEGKT), and aspartate 509. The segment covering 818-840 (QDEGLKFNQREGEDAPAVREKKI) has biased composition (basic and acidic residues). Residues 818–869 (QDEGLKFNQREGEDAPAVREKKIPRNSPCPCGSGKKYKDCCGKSGPKKGILA) are disordered. The Zn(2+) site is built by cysteine 846, cysteine 848, cysteine 857, and cysteine 858.

The protein belongs to the SecA family. In terms of assembly, monomer and homodimer. Part of the essential Sec protein translocation apparatus which comprises SecA, SecYEG and auxiliary proteins SecDF-YajC and YidC. Zn(2+) is required as a cofactor.

The protein localises to the cell inner membrane. Its subcellular location is the cytoplasm. It catalyses the reaction ATP + H2O + cellular proteinSide 1 = ADP + phosphate + cellular proteinSide 2.. In terms of biological role, part of the Sec protein translocase complex. Interacts with the SecYEG preprotein conducting channel. Has a central role in coupling the hydrolysis of ATP to the transfer of proteins into and across the cell membrane, serving as an ATP-driven molecular motor driving the stepwise translocation of polypeptide chains across the membrane. The sequence is that of Protein translocase subunit SecA from Campylobacter curvus (strain 525.92).